We begin with the raw amino-acid sequence, 85 residues long: Small ribosomal subunit protein uS17 (85 aa).

It belongs to the universal ribosomal protein uS17 family. Part of the 30S ribosomal subunit.

One of the primary rRNA binding proteins, it binds specifically to the 5'-end of 16S ribosomal RNA. This Mycoplasma genitalium (strain ATCC 33530 / DSM 19775 / NCTC 10195 / G37) (Mycoplasmoides genitalium) protein is Small ribosomal subunit protein uS17.